Reading from the N-terminus, the 201-residue chain is Female-specific protein transformer (201 aa).

Positions 1–117 (MDADSSSRSP…RSRSRSRTPR (117 aa)) are disordered. Positions 9 to 37 (SPRDTRTCARPKEKVPYFADEGRERDRVR) are enriched in basic and acidic residues. 2 stretches are compositionally biased toward basic residues: residues 38–62 (NLRH…RARS) and 99–115 (KQRR…RSRT).

Its subcellular location is the nucleus speckle. In terms of biological role, member of the regulatory pathway controlling female somatic sexual differentiation, regulated by Sxl. Activates dsx female-specific splicing by promoting the formation of a splicing enhancer complex which consists of tra, tra2 and sr proteins. In Drosophila hydei (Fruit fly), this protein is Female-specific protein transformer (tra).